The primary structure comprises 110 residues: Nucleoid-associated protein Mkms_4993 (110 aa).

This sequence belongs to the YbaB/EbfC family. Homodimer.

The protein localises to the cytoplasm. Its subcellular location is the nucleoid. Functionally, binds to DNA and alters its conformation. May be involved in regulation of gene expression, nucleoid organization and DNA protection. This chain is Nucleoid-associated protein Mkms_4993, found in Mycobacterium sp. (strain KMS).